Here is a 124-residue protein sequence, read N- to C-terminus: Large ribosomal subunit protein uL18 (124 aa).

It belongs to the universal ribosomal protein uL18 family. As to quaternary structure, part of the 50S ribosomal subunit; part of the 5S rRNA/L5/L18/L25 subcomplex. Contacts the 5S and 23S rRNAs.

This is one of the proteins that bind and probably mediate the attachment of the 5S RNA into the large ribosomal subunit, where it forms part of the central protuberance. The chain is Large ribosomal subunit protein uL18 from Aquifex pyrophilus.